A 165-amino-acid chain; its full sequence is Nucleotide-binding protein Suden_0039 (165 aa).

It belongs to the YajQ family.

Its function is as follows. Nucleotide-binding protein. This chain is Nucleotide-binding protein Suden_0039, found in Sulfurimonas denitrificans (strain ATCC 33889 / DSM 1251) (Thiomicrospira denitrificans (strain ATCC 33889 / DSM 1251)).